Consider the following 326-residue polypeptide: Vitamin B12 import system permease protein BtuC (326 aa).

9 consecutive transmembrane segments (helical) span residues 17 to 39 (LSLS…QWIA), 59 to 81 (RTLA…QALF), 88 to 107 (PGLL…AVLL), 111 to 133 (QLPG…LILL), 146 to 168 (LLAG…YFST), 188 to 205 (WQQS…IWIC), 242 to 264 (MVGV…PHIL), 274 to 296 (VLLP…VARL), and 303 to 322 (LPIG…WLLL).

Belongs to the binding-protein-dependent transport system permease family. FecCD subfamily. In terms of assembly, the complex is composed of two ATP-binding proteins (BtuD), two transmembrane proteins (BtuC) and a solute-binding protein (BtuF).

It is found in the cell inner membrane. Part of the ABC transporter complex BtuCDF involved in vitamin B12 import. Involved in the translocation of the substrate across the membrane. The sequence is that of Vitamin B12 import system permease protein BtuC from Salmonella typhi.